A 224-amino-acid chain; its full sequence is Phosphoribosylformylglycinamidine synthase subunit PurQ (224 aa).

The region spanning 4 to 224 (FGIIVFPGSN…ATDGLAMFIS (221 aa)) is the Glutamine amidotransferase type-1 domain. The active-site Nucleophile is the C87. Active-site residues include H204 and E206.

In terms of assembly, part of the FGAM synthase complex composed of 1 PurL, 1 PurQ and 2 PurS subunits.

The protein resides in the cytoplasm. It catalyses the reaction N(2)-formyl-N(1)-(5-phospho-beta-D-ribosyl)glycinamide + L-glutamine + ATP + H2O = 2-formamido-N(1)-(5-O-phospho-beta-D-ribosyl)acetamidine + L-glutamate + ADP + phosphate + H(+). The catalysed reaction is L-glutamine + H2O = L-glutamate + NH4(+). It participates in purine metabolism; IMP biosynthesis via de novo pathway; 5-amino-1-(5-phospho-D-ribosyl)imidazole from N(2)-formyl-N(1)-(5-phospho-D-ribosyl)glycinamide: step 1/2. Part of the phosphoribosylformylglycinamidine synthase complex involved in the purines biosynthetic pathway. Catalyzes the ATP-dependent conversion of formylglycinamide ribonucleotide (FGAR) and glutamine to yield formylglycinamidine ribonucleotide (FGAM) and glutamate. The FGAM synthase complex is composed of three subunits. PurQ produces an ammonia molecule by converting glutamine to glutamate. PurL transfers the ammonia molecule to FGAR to form FGAM in an ATP-dependent manner. PurS interacts with PurQ and PurL and is thought to assist in the transfer of the ammonia molecule from PurQ to PurL. The protein is Phosphoribosylformylglycinamidine synthase subunit PurQ of Synechocystis sp. (strain ATCC 27184 / PCC 6803 / Kazusa).